We begin with the raw amino-acid sequence, 723 residues long: Catalase-peroxidase (723 aa).

Positions 96-224 (WHAAGSYRVA…LAAVMMGLIY (129 aa)) form a cross-link, tryptophyl-tyrosyl-methioninium (Trp-Tyr) (with M-250). Residue H97 is the Proton acceptor of the active site. Positions 224–250 (YVNPEGVDGQPDPLKTAQDVRVTFARM) form a cross-link, tryptophyl-tyrosyl-methioninium (Tyr-Met) (with W-96). Heme b is bound at residue H265.

Belongs to the peroxidase family. Peroxidase/catalase subfamily. As to quaternary structure, homodimer or homotetramer. Requires heme b as cofactor. In terms of processing, formation of the three residue Trp-Tyr-Met cross-link is important for the catalase, but not the peroxidase activity of the enzyme.

The enzyme catalyses H2O2 + AH2 = A + 2 H2O. It carries out the reaction 2 H2O2 = O2 + 2 H2O. Bifunctional enzyme with both catalase and broad-spectrum peroxidase activity. This Leptothrix cholodnii (strain ATCC 51168 / LMG 8142 / SP-6) (Leptothrix discophora (strain SP-6)) protein is Catalase-peroxidase.